The chain runs to 473 residues: UDP-N-acetylmuramate--L-alanine ligase (473 aa).

114–120 contributes to the ATP binding site; sequence GTHGKTT.

This sequence belongs to the MurCDEF family.

The protein localises to the cytoplasm. It catalyses the reaction UDP-N-acetyl-alpha-D-muramate + L-alanine + ATP = UDP-N-acetyl-alpha-D-muramoyl-L-alanine + ADP + phosphate + H(+). Its pathway is cell wall biogenesis; peptidoglycan biosynthesis. Functionally, cell wall formation. The chain is UDP-N-acetylmuramate--L-alanine ligase from Chlorobium luteolum (strain DSM 273 / BCRC 81028 / 2530) (Pelodictyon luteolum).